A 126-amino-acid polypeptide reads, in one-letter code: Adult-specific rigid cuticular protein 12.4 (126 aa).

The Chitin-binding type R&amp;R domain maps to 9–87 (GGAYNFGFNT…AMAALAPKAP (79 aa)).

Its function is as follows. Component of the rigid cuticle of the spider. This chain is Adult-specific rigid cuticular protein 12.4, found in Araneus diadematus (European garden spider).